The following is a 321-amino-acid chain: Solute carrier family 25 member 33 (321 aa).

Solcar repeat units follow at residues Glu-9 to Gln-118, Asn-126 to Tyr-213, and Thr-231 to Leu-315. A run of 6 helical transmembrane segments spans residues Leu-12 to Leu-32, Val-49 to Val-65, Gly-121 to Ile-141, Leu-190 to Leu-210, Phe-233 to Pro-253, and Gln-298 to Asp-318.

The protein belongs to the mitochondrial carrier (TC 2.A.29) family. Expressed in the central nervous system. Also expressed in testis and skeletal muscle. Weakly expressed in heart, liver, kidney, prostate, colon and peripheral blood leukocytes.

It localises to the mitochondrion inner membrane. The catalysed reaction is UTP(in) + UDP(out) = UTP(out) + UDP(in). It carries out the reaction dUTP(out) + UTP(in) = dUTP(in) + UTP(out). The enzyme catalyses 5-methyl-UTP(out) + UTP(in) = 5-methyl-UTP(in) + UTP(out). It catalyses the reaction 5-methyl-UDP(out) + UTP(in) = 5-methyl-UDP(in) + UTP(out). The catalysed reaction is UTP(in) + CTP(out) = UTP(out) + CTP(in). It carries out the reaction CDP(out) + UTP(in) = CDP(in) + UTP(out). The enzyme catalyses dCTP(out) + UTP(in) = dCTP(in) + UTP(out). It catalyses the reaction dCDP(out) + UTP(in) = dCDP(in) + UTP(out). The catalysed reaction is UTP(in) + GTP(out) = UTP(out) + GTP(in). It carries out the reaction UTP(in) + GDP(out) = UTP(out) + GDP(in). The enzyme catalyses dGTP(out) + UTP(in) = dGTP(in) + UTP(out). It catalyses the reaction dGDP(out) + UTP(in) = dGDP(in) + UTP(out). The catalysed reaction is ITP(out) + UTP(in) = ITP(in) + UTP(out). With respect to regulation, inhibited by pyridoxal 5'-phosphate, 4,7-diphenyl-1,10-phenanthroline, tannic acid, and mercurials (mercury dichloride, mersalyl acid, p-hydroxymercuribenzoate). In terms of biological role, mitochondrial transporter that imports/exports pyrimidine nucleotides into and from mitochondria. Selectively transports uridine, thymidine, guanosine, cytosine and inosine (deoxy)nucleoside di- and triphosphates by an antiport mechanism. May import (deoxy)nucleoside triphosphates in exchange for intramitochondrial (deoxy)nucleoside diphosphates, thus providing precursors necessary for de novo synthesis of mitochondrial DNA and RNA while exporting products of their catabolism. Participates in mitochondrial genome maintenance, regulation of mitochondrial membrane potential and mitochondrial respiration. Upon INS or IGF1 stimulation regulates cell growth and proliferation by controlling mitochondrial DNA replication and transcription, the ratio of mitochondria-to nuclear-encoded components of the electron transport chain resulting in control of mitochondrial ROS production. Participates in dendritic cell endocytosis and may associate with mitochondrial oxidative phosphorylation. This is Solute carrier family 25 member 33 (SLC25A33) from Homo sapiens (Human).